The sequence spans 1212 residues: DNA topoisomerase 1 (1212 aa).

The region spanning methionine 1 to isoleucine 114 is the Toprim domain. Positions 7 and 80 each coordinate Mg(2+). Residues aspartate 130 to threonine 556 enclose the Topo IA-type catalytic domain. Positions serine 164 to glutamine 169 are interaction with DNA. Residue tyrosine 293 is the O-(5'-phospho-DNA)-tyrosine intermediate of the active site. A C4-type zinc finger spans residues cysteine 592 to cysteine 619. Disordered regions lie at residues glycine 687–threonine 742, alanine 758–alanine 937, and arginine 1107–glutamate 1212. Composition is skewed to polar residues over residues alanine 708 to threonine 742 and valine 770 to isoleucine 782. The span at alanine 815 to serine 840 shows a compositional bias: basic and acidic residues. Composition is skewed to polar residues over residues alanine 881–aspartate 890 and serine 897–valine 906. The span at lysine 921 to lysine 934 shows a compositional bias: basic and acidic residues. Basic residues predominate over residues lysine 1109 to threonine 1140. Low complexity predominate over residues threonine 1141–threonine 1151. Residues proline 1167–alanine 1182 are compositionally biased toward basic residues. The span at serine 1183–lysine 1199 shows a compositional bias: low complexity.

Belongs to the type IA topoisomerase family. In terms of assembly, monomer. Mg(2+) is required as a cofactor.

The catalysed reaction is ATP-independent breakage of single-stranded DNA, followed by passage and rejoining.. Releases the supercoiling and torsional tension of DNA, which is introduced during the DNA replication and transcription, by transiently cleaving and rejoining one strand of the DNA duplex. Introduces a single-strand break via transesterification at a target site in duplex DNA. The scissile phosphodiester is attacked by the catalytic tyrosine of the enzyme, resulting in the formation of a DNA-(5'-phosphotyrosyl)-enzyme intermediate and the expulsion of a 3'-OH DNA strand. The free DNA strand then undergoes passage around the unbroken strand, thus removing DNA supercoils. Finally, in the religation step, the DNA 3'-OH attacks the covalent intermediate to expel the active-site tyrosine and restore the DNA phosphodiester backbone. The polypeptide is DNA topoisomerase 1 (Zymomonas mobilis subsp. mobilis (strain ATCC 31821 / ZM4 / CP4)).